The primary structure comprises 1090 residues: UPF0507 protein EC1118_1M3_1541g (1090 aa).

Positions 289 to 436 constitute a VPS9 domain; sequence FSVNQLLTDF…FEDFNKNTGN (148 aa).

It belongs to the UPF0507 family.

The polypeptide is UPF0507 protein EC1118_1M3_1541g (Saccharomyces cerevisiae (strain Lalvin EC1118 / Prise de mousse) (Baker's yeast)).